A 463-amino-acid chain; its full sequence is Lariat debranching enzyme (463 aa).

Residues Cys8, His10, Asp33, and Asn78 each coordinate a divalent metal cation. The lariat recognition loop stretch occupies residues 118–148 (SGIYSAMDYKKGRYEGLPYNYKMLKSIYHTR). A divalent metal cation-binding residues include His168, His220, and His222. The segment at 250-324 (SGFSMKGLNE…QVTKFLALDK (75 aa)) is disordered. The segment covering 256 to 267 (GLNEPSQERLPV) has biased composition (polar residues). Basic and acidic residues-rich tracts occupy residues 276–289 (DEEGSNNEQEEKQD) and 299–323 (CRKESCKKEPSLSSSDQVTKFLALD).

It belongs to the lariat debranching enzyme family. Fe(2+) is required as a cofactor. Zn(2+) serves as cofactor. Requires Mn(2+) as cofactor.

The protein localises to the nucleus. It is found in the cytoplasm. Active in presence of diverse metals including Fe(2+), Zn(2+) and Mn(2+). Binds two metal cations in two adjacent alpha and beta metal-binding pockets. Functionally, cleaves the 2'-5' phosphodiester linkage at the branch point of lariat intron pre-mRNAs after splicing and converts them into linear molecules that are subsequently degraded, thereby facilitating ribonucleotide turnover. This is Lariat debranching enzyme (dbr1) from Schizosaccharomyces pombe (strain 972 / ATCC 24843) (Fission yeast).